A 334-amino-acid chain; its full sequence is L-lactate dehydrogenase B chain (334 aa).

Residue A2 is modified to N-acetylalanine. Position 7 is an N6-acetyllysine (K7). NAD(+) contacts are provided by residues 30 to 58 (GQVG…LEDK) and R100. At S44 the chain carries Phosphoserine. K58 bears the N6-acetyllysine mark. R107 is a binding site for substrate. K119 is modified (N6-acetyllysine). N139 contributes to the NAD(+) binding site. Residues N139 and R170 each coordinate substrate. The active-site Proton acceptor is the H194. Position 240 is a phosphotyrosine (Y240). T249 provides a ligand contact to substrate. The residue at position 329 (K329) is an N6-acetyllysine.

The protein belongs to the LDH/MDH superfamily. LDH family. In terms of assembly, homotetramer. Interacts with PTEN upstream reading frame protein MP31; the interaction leads to inhibition of mitochondrial lactate dehydrogenase activity, preventing conversion of lactate to pyruvate in mitochondria.

It localises to the cytoplasm. The protein resides in the mitochondrion inner membrane. The catalysed reaction is (S)-lactate + NAD(+) = pyruvate + NADH + H(+). It participates in fermentation; pyruvate fermentation to lactate; (S)-lactate from pyruvate: step 1/1. Functionally, interconverts simultaneously and stereospecifically pyruvate and lactate with concomitant interconversion of NADH and NAD(+). The polypeptide is L-lactate dehydrogenase B chain (Ldhb) (Rattus norvegicus (Rat)).